The primary structure comprises 191 residues: Peptide methionine sulfoxide reductase MsrA (191 aa).

Cysteine 21 is a catalytic residue.

Belongs to the MsrA Met sulfoxide reductase family.

The enzyme catalyses L-methionyl-[protein] + [thioredoxin]-disulfide + H2O = L-methionyl-(S)-S-oxide-[protein] + [thioredoxin]-dithiol. The catalysed reaction is [thioredoxin]-disulfide + L-methionine + H2O = L-methionine (S)-S-oxide + [thioredoxin]-dithiol. Its function is as follows. Has an important function as a repair enzyme for proteins that have been inactivated by oxidation. Catalyzes the reversible oxidation-reduction of methionine sulfoxide in proteins to methionine. This is Peptide methionine sulfoxide reductase MsrA from Ralstonia nicotianae (strain ATCC BAA-1114 / GMI1000) (Ralstonia solanacearum).